Reading from the N-terminus, the 782-residue chain is Semaphorin-3G (782 aa).

The first 22 residues, 1–22 (MAPSAWAICWLLGGLLLHGGSS), serve as a signal peptide directing secretion. The Sema domain occupies 32-519 (RLRLSYRDLL…SRLGVAQLRL (488 aa)). The N-linked (GlcNAc...) asparagine glycan is linked to asparagine 44. A disulfide bridge connects residues cysteine 105 and cysteine 116. A glycan (N-linked (GlcNAc...) asparagine) is linked at asparagine 127. Disulfide bonds link cysteine 134–cysteine 143, cysteine 270–cysteine 382, cysteine 294–cysteine 342, cysteine 522–cysteine 540, and cysteine 603–cysteine 655. An Ig-like C2-type domain is found at 569–671 (PALQCLGQSQ…FSQTVVRLAL (103 aa)).

The protein belongs to the semaphorin family.

The protein resides in the secreted. Has chemorepulsive activities for sympathetic axons. Ligand of NRP2. The sequence is that of Semaphorin-3G (SEMA3G) from Homo sapiens (Human).